The sequence spans 79 residues: D-alanyl carrier protein (79 aa).

In terms of domain architecture, Carrier spans M1–E77. S35 bears the O-(pantetheine 4'-phosphoryl)serine mark.

It belongs to the DltC family. Post-translationally, 4'-phosphopantetheine is transferred from CoA to a specific serine of apo-DCP.

It localises to the cytoplasm. Its pathway is cell wall biogenesis; lipoteichoic acid biosynthesis. In terms of biological role, carrier protein involved in the D-alanylation of lipoteichoic acid (LTA). The loading of thioester-linked D-alanine onto DltC is catalyzed by D-alanine--D-alanyl carrier protein ligase DltA. The DltC-carried D-alanyl group is further transferred to cell membrane phosphatidylglycerol (PG) by forming an ester bond, probably catalyzed by DltD. D-alanylation of LTA plays an important role in modulating the properties of the cell wall in Gram-positive bacteria, influencing the net charge of the cell wall. This chain is D-alanyl carrier protein, found in Lactobacillus helveticus (strain DPC 4571).